A 349-amino-acid chain; its full sequence is MTKLRKIIHIDMDYFFAQVEEKANPSLKDKPFAVGGTNPKRGVISTCNYIAREYGVRSAMPTAIAMQKCPNLILLNTDFAKYKAASAVIRDIFYSFTDKVEPLSLDEAYLDVTDVKEYKNSATLIAQAIKQEIFNKTGLTGSAGVAPNKLLAKIASDINKPNGLYVITPEQVDSFVKDLPVKKLFGVGKVSQEKLKTMNVETCLDLQQLSLATLLDKFGKFGNNLYSYARGIDNREVNPVRIRKSVSVENTYLEDLKTLNACLEKLPSLYDKLTSRMTEEHYKSIVGIVVKFTDTKFNKTSLTRVAKTLDKEAIKSLIIELYQKQNHPIRLIGIGVKLGEVEDRQMKLF.

One can recognise a UmuC domain in the interval 7–188 (IIHIDMDYFF…LPVKKLFGVG (182 aa)). Mg(2+) is bound by residues aspartate 11 and aspartate 106. Residue glutamate 107 is part of the active site.

The protein belongs to the DNA polymerase type-Y family. In terms of assembly, monomer. Requires Mg(2+) as cofactor.

The protein localises to the cytoplasm. It carries out the reaction DNA(n) + a 2'-deoxyribonucleoside 5'-triphosphate = DNA(n+1) + diphosphate. Functionally, poorly processive, error-prone DNA polymerase involved in untargeted mutagenesis. Copies undamaged DNA at stalled replication forks, which arise in vivo from mismatched or misaligned primer ends. These misaligned primers can be extended by PolIV. Exhibits no 3'-5' exonuclease (proofreading) activity. May be involved in translesional synthesis, in conjunction with the beta clamp from PolIII. The polypeptide is DNA polymerase IV (Francisella tularensis subsp. novicida (strain U112)).